Here is a 316-residue protein sequence, read N- to C-terminus: Olfactory receptor 6B9 (316 aa).

Over 1 to 22 the chain is Extracellular; it reads MENITNISEFILMGFPTAPWLQ. N-linked (GlcNAc...) asparagine glycosylation is found at asparagine 3 and asparagine 6. The helical transmembrane segment at 23–43 threads the bilayer; sequence ILLFSIFFITYVFVLLENLVI. Over 44-64 the chain is Cytoplasmic; sequence ILTVWVTGSLHKPMYYFLSTM. Residues 65–85 traverse the membrane as a helical segment; that stretch reads SFLEAWYISVTVPKMLAGFLF. The Extracellular segment spans residues 86–97; it reads RPNTISFLGCMT. Cysteine 95 and cysteine 187 are disulfide-bonded. A helical transmembrane segment spans residues 98-118; that stretch reads QLYFFMSLACTECVLLAAMAY. Over 119–132 the chain is Cytoplasmic; that stretch reads DRYVAICWPLRYPV. A helical membrane pass occupies residues 133-153; the sequence is MMTTGFCVQLTISSWVSGFTI. The Extracellular segment spans residues 154 to 199; the sequence is SMAKVYFISRVAFCGNNVLNHFFCDVSPILKLACMNLSMAETVDFA. A helical membrane pass occupies residues 200–220; sequence LAIVILIFPLSATVLSYGFIV. At 221-237 the chain is on the cytoplasmic side; sequence STVLQIPSATGQRKAFS. The chain crosses the membrane as a helical span at residues 238–258; that stretch reads TCASHLTVVVIFYTAVIFMYV. Topologically, residues 259-269 are extracellular; that stretch reads RPRAIASFNSN. The chain crosses the membrane as a helical span at residues 270–290; it reads KLISAIYAVFTPMLNPIIYCL. Over 291 to 316 the chain is Cytoplasmic; sequence RNKEVKDAIRKTIAGGRAPALGESIS.

It belongs to the G-protein coupled receptor 1 family. Olfactory epithelium.

Its subcellular location is the cell membrane. Its function is as follows. Odorant receptor. In Mus musculus (Mouse), this protein is Olfactory receptor 6B9.